Reading from the N-terminus, the 559-residue chain is METSKEFEFRPAKETSRSKSPGGIVGRLSNFARNKARHSLSEKGSNSVGGSGGSGFDKPRKDLLKEFHKCKEAQDQRLDLSSIEITSIPSPIKELTQLTELFLYKNKLTCLPTEIGQLVNLKKLGLSENALSSLPDSLSSLESLETLDLRHNKLTEVPAVIYKITSLETLWLRYNRIVAVDEQIGNLQKLKMLDVRENKIRELPSAIGKLSSLVVCLVSYNHLTRVPEEIGECHALTQLDLQHNDLSELPYSIGKLTNLVRIGIRYNKIRCIPSELESCQQLEEFIVESNHLQLLPPNLLTMLPKIHTVNLSRNELTAFPAGGPQQFVPTVTINMEHNQISKIPIGIFSKATRLTKLNLKENELVSLPLDMGSWTSITELNLSTNQLKVLPEDIEKLVNLEILVLSNNQLKKLPNQIGNLKKLRELDLEENELETVPTEIGFLQHLTKLWVQSNKIVTLPRSIGNLCSLQDLRLGENNLTAIPEEIGHLDSLKSLYLNDNSSLHNLPFELALCQSLEIMSIENSPLSQIPPEITAGGPSLVIQYLKMQGPYRGVVMTGQ.

Over residues Met1–Arg17 the composition is skewed to basic and acidic residues. A disordered region spans residues Met1 to Gly55. LRR repeat units lie at residues Gln74 to Leu95, Gln97 to Leu118, Asn120 to Leu141, Ser143 to Ile164, Ser166 to Leu187, Lys189 to Leu210, Ser212 to Cys233, Ala235 to Thr257, Asn258 to Cys279, Gln281 to Met302, Lys305 to Gln326, Pro329 to Lys350, Arg353 to Trp374, Ser376 to Leu397, Asn399 to Leu420, Lys422 to Leu443, His445 to Leu466, Ser468 to Leu489, Ser491 to Cys513, and Ser515 to Gly536.

Belongs to the SHOC2 family. As to quaternary structure, interacts with let-60.

Acts as a Ras effector and participates in MAPK pathway activation. Probably acts as a scaffolding protein in a protein phosphatase complex that specifically dephosphorylates Raf kinase and stimulates Raf activity at specialized signaling complexes upon Ras activation. Required for vulval development. Involved in fluid homeostasis. Plays a role in nicotinic acetylcholine receptor (nAChR)-mediated sensitivity to nicotine. This is Leucine-rich repeat protein soc-2 (soc-2) from Caenorhabditis briggsae.